The primary structure comprises 325 residues: Tetraacyldisaccharide 4'-kinase (325 aa).

Residue 53 to 60 (SVGGNGKT) participates in ATP binding.

It belongs to the LpxK family.

It carries out the reaction a lipid A disaccharide + ATP = a lipid IVA + ADP + H(+). It participates in glycolipid biosynthesis; lipid IV(A) biosynthesis; lipid IV(A) from (3R)-3-hydroxytetradecanoyl-[acyl-carrier-protein] and UDP-N-acetyl-alpha-D-glucosamine: step 6/6. Its function is as follows. Transfers the gamma-phosphate of ATP to the 4'-position of a tetraacyldisaccharide 1-phosphate intermediate (termed DS-1-P) to form tetraacyldisaccharide 1,4'-bis-phosphate (lipid IVA). The polypeptide is Tetraacyldisaccharide 4'-kinase (Mannheimia succiniciproducens (strain KCTC 0769BP / MBEL55E)).